Here is a 160-residue protein sequence, read N- to C-terminus: Early E3 18.5 kDa glycoprotein (160 aa).

The first 17 residues, methionine 1–glycine 17, serve as a signal peptide directing secretion. At threonine 18–glycine 124 the chain is on the lumenal side. 2 disulfide bridges follow: cysteine 29-cysteine 46 and cysteine 40-cysteine 101. 2 N-linked (GlcNAc...) asparagine; by host glycosylation sites follow: asparagine 30 and asparagine 79. A helical transmembrane segment spans residues threonine 125 to isoleucine 145. The Cytoplasmic segment spans residues lysine 146–proline 160. The Di-lysine motif motif lies at lysine 157–proline 160.

Belongs to the adenoviridae E19 family. In terms of processing, both disulfide bonds are absolutely critical for the interaction with MHC antigens. N-glycosylated; high-mannose.

Its subcellular location is the host endoplasmic reticulum membrane. In terms of biological role, binds and retains class I heavy chains in the endoplasmic reticulum during the early period of virus infection, thereby impairing their transport to the cell surface. Also delays the expression of class I alleles that it cannot affect by direct retention. Binds transporters associated with antigen processing (TAP) and acts as a tapasin inhibitor, preventing class I/TAP association. In consequence, infected cells are masked for immune recognition by cytotoxic T-lymphocytes. In Homo sapiens (Human), this protein is Early E3 18.5 kDa glycoprotein.